The chain runs to 95 residues: 1,2-phenylacetyl-CoA epoxidase, subunit B (95 aa).

As to quaternary structure, homotrimer. Forms a stable heterodimer with PaaC. Probably forms an oligomer with PaaAC.

The protein operates within aromatic compound metabolism; phenylacetate degradation. Functionally, component of 1,2-phenylacetyl-CoA epoxidase multicomponent enzyme system which catalyzes the reduction of phenylacetyl-CoA (PA-CoA) to form 1,2-epoxyphenylacetyl-CoA. The subunit B may play a regulatory role or be directly involved in electron transport. This Escherichia coli (strain K12) protein is 1,2-phenylacetyl-CoA epoxidase, subunit B (paaB).